A 262-amino-acid chain; its full sequence is Nurim (262 aa).

Residues 1–4 lie on the Nuclear side of the membrane; that stretch reads MAPA. A helical membrane pass occupies residues 5 to 28; the sequence is LLLVPAALASFVLAFGTGVEFVRF. Over 29 to 58 the chain is Perinuclear space; it reads TSLRPLLGGIPESGGPDARHGWLAALQDRS. A helical membrane pass occupies residues 59-80; it reads ILASLAWDLCLLLLFVVQHSLM. Over 81–97 the chain is Nuclear; sequence ATEAVKAWTSRYFGVLQ. A helical membrane pass occupies residues 98 to 114; sequence RSLYVACTALALQLVMR. Over 115–133 the chain is Perinuclear space; it reads YWEATPRGPVLWEARAEPW. Residues 134–164 traverse the membrane as a helical segment; sequence ATWVPLLCFVLHVVSWLLIFSILLVFDYAEL. The Nuclear segment spans residues 165–191; sequence MGLKQVYYHVLGLGEPLSLKSPRALRL. The chain crosses the membrane as a helical span at residues 192–210; the sequence is FSHLRHPVCVELLTVLWVV. Over 211–216 the chain is Perinuclear space; the sequence is PTLGTD. The helical transmembrane segment at 217–234 threads the bilayer; sequence RLLLALLFTLYLGLAHGL. Residues 235 to 262 are Nuclear-facing; sequence DQQDLRYLRSQLQRKLQLLSRPQDGEAE.

The protein belongs to the nurim family.

The protein localises to the nucleus inner membrane. This Rattus norvegicus (Rat) protein is Nurim (Nrm).